The sequence spans 290 residues: Protein MGF 110-9L (290 aa).

3 helical membrane passes run 1 to 19 (MKVI…VIQN), 128 to 148 (VENI…MVYI), and 163 to 183 (LLIF…IIMN). Residues asparagine 242 and asparagine 267 are each glycosylated (N-linked (GlcNAc...) asparagine; by host).

This sequence belongs to the asfivirus MGF 110 family.

The protein resides in the host membrane. In terms of biological role, plays a role in virus cell tropism, and may be required for efficient virus replication in macrophages. The sequence is that of Protein MGF 110-9L from Ornithodoros (relapsing fever ticks).